The chain runs to 89 residues: MAISKEKKNEIIAQYARHEGDTGSVEVQVAVLTWEINHLNDHIKQHKKDHATYRGLMKKIGHRRNLLAYLRRTDVNRYRELIQSLGLRR.

The protein belongs to the universal ribosomal protein uS15 family. Part of the 30S ribosomal subunit. Forms a bridge to the 50S subunit in the 70S ribosome, contacting the 23S rRNA.

One of the primary rRNA binding proteins, it binds directly to 16S rRNA where it helps nucleate assembly of the platform of the 30S subunit by binding and bridging several RNA helices of the 16S rRNA. In terms of biological role, forms an intersubunit bridge (bridge B4) with the 23S rRNA of the 50S subunit in the ribosome. The protein is Small ribosomal subunit protein uS15 of Streptococcus agalactiae serotype Ia (strain ATCC 27591 / A909 / CDC SS700).